Here is a 186-residue protein sequence, read N- to C-terminus: ATP synthase subunit delta (186 aa).

It belongs to the ATPase delta chain family. F-type ATPases have 2 components, F(1) - the catalytic core - and F(0) - the membrane proton channel. F(1) has five subunits: alpha(3), beta(3), gamma(1), delta(1), epsilon(1). F(0) has three main subunits: a(1), b(2) and c(10-14). The alpha and beta chains form an alternating ring which encloses part of the gamma chain. F(1) is attached to F(0) by a central stalk formed by the gamma and epsilon chains, while a peripheral stalk is formed by the delta and b chains.

Its subcellular location is the cell inner membrane. In terms of biological role, f(1)F(0) ATP synthase produces ATP from ADP in the presence of a proton or sodium gradient. F-type ATPases consist of two structural domains, F(1) containing the extramembraneous catalytic core and F(0) containing the membrane proton channel, linked together by a central stalk and a peripheral stalk. During catalysis, ATP synthesis in the catalytic domain of F(1) is coupled via a rotary mechanism of the central stalk subunits to proton translocation. This protein is part of the stalk that links CF(0) to CF(1). It either transmits conformational changes from CF(0) to CF(1) or is implicated in proton conduction. The chain is ATP synthase subunit delta from Bacteroides fragilis (strain ATCC 25285 / DSM 2151 / CCUG 4856 / JCM 11019 / LMG 10263 / NCTC 9343 / Onslow / VPI 2553 / EN-2).